The sequence spans 205 residues: Molybdenum cofactor guanylyltransferase (205 aa).

Residues leucine 14–glycine 16, lysine 27, aspartate 77, and aspartate 107 each bind GTP. Position 107 (aspartate 107) interacts with Mg(2+).

Belongs to the MobA family. In terms of assembly, monomer. Mg(2+) serves as cofactor.

It is found in the cytoplasm. It carries out the reaction Mo-molybdopterin + GTP + H(+) = Mo-molybdopterin guanine dinucleotide + diphosphate. Transfers a GMP moiety from GTP to Mo-molybdopterin (Mo-MPT) cofactor (Moco or molybdenum cofactor) to form Mo-molybdopterin guanine dinucleotide (Mo-MGD) cofactor. The chain is Molybdenum cofactor guanylyltransferase from Burkholderia orbicola (strain MC0-3).